A 161-amino-acid polypeptide reads, in one-letter code: Phosphopantetheine adenylyltransferase (161 aa).

A substrate-binding site is contributed by Ser-10. ATP is bound by residues 10–11 (SF) and His-18. 3 residues coordinate substrate: Lys-42, Leu-74, and Arg-88. ATP contacts are provided by residues 88–89 (RG), Glu-99, and 124–130 (YSFLSSS).

Belongs to the bacterial CoaD family. Homohexamer. Mg(2+) is required as a cofactor.

It is found in the cytoplasm. The enzyme catalyses (R)-4'-phosphopantetheine + ATP + H(+) = 3'-dephospho-CoA + diphosphate. It functions in the pathway cofactor biosynthesis; coenzyme A biosynthesis; CoA from (R)-pantothenate: step 4/5. Its function is as follows. Reversibly transfers an adenylyl group from ATP to 4'-phosphopantetheine, yielding dephospho-CoA (dPCoA) and pyrophosphate. The protein is Phosphopantetheine adenylyltransferase of Bacillus subtilis (strain 168).